A 598-amino-acid chain; its full sequence is MVVFGLDFGTTFSSVCAYVGEELYLFKQRDSAYIPTYVFLHSDTQEVAFGYDAEVLSNDLSVRGGFYRDLKRWIGCDEENYRDYLEKLKPHYKTELLKVAQSSKSTVKLDCYSGTVPQNATLPGLIATFVKALISTASEAFKCQCTGVICSVPANYNCLQRSFTESCVNLSGYPCVYMVNEPSAAALSACSRIKGATSPVLVYDFGGGTFDVSVISALNNTFVVRASGGDMNLGGRDIDKAFVEHLYNKAQLPVNYKIDISFLKESLSKKVSFLNFPVVSEQGVRVDVLVNVSELAEVAAPFVERTIKIVKEVYEKYCSSMRLEPNVKAKLLMVGGSSYLPGLLSRLSSIPFVDECLVLPDARAAVAGGCALYSACLRNDSPMLLVDCAAHNLSISSKYCESIVCVPAGSPIPFTGVRTVNMTGSNASAVYSAALFEGDFVKCRLNKRIFFGDVVLGNVGVTGSATRTVPLTLEINVSSVGTISFSLVGPTGVKKLIGGNAAYDFSSYQLGERVVADLHKHNSDKVKLIHALTYQPFQRKKLTDGDKALFLKRLTADYRREARKFSSYDDAVLNSSELLLGRIIPKILRGSRVEKLDV.

Belongs to the heat shock protein 70 family. Homomultimer. Interacts with p20. This interaction allows the docking of the latter to the virion.

It localises to the virion. The protein localises to the host cell junction. It is found in the host plasmodesma. Its function is as follows. Transports viral genome to neighboring plant cells directly through plasmosdesmata, without any budding. The movement protein allows efficient cell to cell propagation, by bypassing the host cell wall barrier. Two movement proteins, p6, Hsp70h and three structural proteins, CP, CPm, and P64 are essential for cell-cell movement. Also plays a role in virion formation. Together with CPm and p64, encapsidates the 5'-terminal portion of the viral genome. The protein is Movement protein Hsp70h of Beta vulgaris (Sugar beet).